Reading from the N-terminus, the 550-residue chain is Flagellin (550 aa).

The protein belongs to the bacterial flagellin family.

The protein resides in the secreted. It is found in the bacterial flagellum. Flagellin is the subunit protein which polymerizes to form the filaments of bacterial flagella. This chain is Flagellin (fliC), found in Shigella flexneri.